The primary structure comprises 237 residues: 2-C-methyl-D-erythritol 4-phosphate cytidylyltransferase (237 aa).

It belongs to the IspD/TarI cytidylyltransferase family. IspD subfamily.

It catalyses the reaction 2-C-methyl-D-erythritol 4-phosphate + CTP + H(+) = 4-CDP-2-C-methyl-D-erythritol + diphosphate. It participates in isoprenoid biosynthesis; isopentenyl diphosphate biosynthesis via DXP pathway; isopentenyl diphosphate from 1-deoxy-D-xylulose 5-phosphate: step 2/6. Functionally, catalyzes the formation of 4-diphosphocytidyl-2-C-methyl-D-erythritol from CTP and 2-C-methyl-D-erythritol 4-phosphate (MEP). In Acidithiobacillus ferrooxidans (strain ATCC 23270 / DSM 14882 / CIP 104768 / NCIMB 8455) (Ferrobacillus ferrooxidans (strain ATCC 23270)), this protein is 2-C-methyl-D-erythritol 4-phosphate cytidylyltransferase.